The chain runs to 534 residues: Inorganic phosphate transporter 1-6 (534 aa).

Residues 1–29 (MGGGGGEQQQLEVLHALDVAKTQWYHFTA) are Cytoplasmic-facing. Residues 30–50 (IVVAGMGFFTDAYDLFCISLV) form a helical membrane-spanning segment. Over 51–75 (TKLLGRIYYRVDGSPSPGTLPPHVS) the chain is Extracellular. The chain crosses the membrane as a helical span at residues 76–96 (ASVNGVAFVGTLSGQLFFGWL). Residues 97 to 104 (GDKLGRKR) lie on the Cytoplasmic side of the membrane. Residues 105 to 125 (VYGITLMLMVLCSLASALSFG) form a helical membrane-spanning segment. At 126–127 (HT) the chain is on the extracellular side. Residues 128 to 148 (PTSVMATLCFFRFWLGFGIGG) traverse the membrane as a helical segment. The Cytoplasmic segment spans residues 149-168 (DYPLSATIMSEYANKKTRGA). The chain crosses the membrane as a helical span at residues 169–189 (FIAAVFAMQGFGIITGGLVAI). Topologically, residues 190 to 216 (LVSASFRAAFPAPPYGEDPVASTPPQA) are extracellular. The helical transmembrane segment at 217–237 (DFVWRIILMLGALPAALTYYW) threads the bilayer. At 238–294 (RTKMPETARYTALVANNAKQAAADMSKVLQVVEMRNIGNNGGSRRPFGLFSGEFVRR) the chain is on the cytoplasmic side. The chain crosses the membrane as a helical span at residues 295 to 315 (HGLHLVGTSATWLLLDIAFYS). At 316–350 (QNLFQKDIFSAVGWIPKAATMSALEELFRIARAQT) the chain is on the extracellular side. Residues 351 to 371 (LIALCGTVPGYWFTVALIDVV) traverse the membrane as a helical segment. Topologically, residues 372–375 (GRFK) are cytoplasmic. Residues 376 to 396 (IQAVGFFMMTLFMLTLALPYH) form a helical membrane-spanning segment. The Extracellular portion of the chain corresponds to 397-405 (HWTAPGKNH). The helical transmembrane segment at 406-426 (VGFLLLYGLTFFFANFGPNST) threads the bilayer. Residues 427-445 (TFIVPAEIFPARLRATCHG) are Cytoplasmic-facing. The chain crosses the membrane as a helical span at residues 446-466 (ISAASGKLGAIVGSFGFLYLA). Residues 467-486 (QSPDRSKTEHGYPPGIGVRN) are Extracellular-facing. A helical transmembrane segment spans residues 487–507 (SLFLLAACNLLGLLFTFLVPE). Topologically, residues 508–534 (SKGKSLEEMSGDAEAQEEAPPPLQTVL) are cytoplasmic. Residues 514 to 534 (EEMSGDAEAQEEAPPPLQTVL) form a disordered region.

Belongs to the major facilitator superfamily. Phosphate:H(+) symporter (TC 2.A.1.9) family. In terms of tissue distribution, highly expressed in leaves and at low levels in roots. Expressed in leaf xylem parenchyma cells.

It localises to the membrane. In terms of biological role, high-affinity transporter for external inorganic phosphate (Pi). Probably involved in Pi uptake, translocation and internal transport throughout the plant. This is Inorganic phosphate transporter 1-6 (PHT1-6) from Oryza sativa subsp. japonica (Rice).